The primary structure comprises 217 residues: Glutathione S-transferase U20 (217 aa).

The GST N-terminal domain occupies 3 to 82 (NLPILLDYWP…YVDEAWPEKN (80 aa)). Glutathione contacts are provided by Ser13, Ile54, and Ser67. Positions 88–208 (DPYGRAQARF…LPDSEKIVAY (121 aa)) constitute a GST C-terminal domain.

This sequence belongs to the GST superfamily. Tau family. In terms of assembly, homodimerization. Interacts with JAR1/FIN219 under continuous far red (cFR) light to stimulate JAR1/FIN219 activity and substrate selectivity. As to expression, mostly associated with vascular tissues, especially near hydathodes.

It is found in the nucleus. The protein localises to the cytoplasm. Its subcellular location is the cytosol. The enzyme catalyses RX + glutathione = an S-substituted glutathione + a halide anion + H(+). With respect to regulation, activated by JAR1/FIN219. In terms of biological role, exhibits glutathione-dependent thiol transferase activities. Can use glutathione (GSH) and 1-chloro-2,4-dinitrobenzene (CDNB) as substrates. Involved in the regulation of far-red light influence on development. Regulator of the interplay between light and JA signaling by increasing JAR1/FIN219 efficiency. Maybe involved in gravitropic signal transduction. This is Glutathione S-transferase U20 from Arabidopsis thaliana (Mouse-ear cress).